The chain runs to 226 residues: Glutathione peroxidase 3 (226 aa).

Residues 1–24 form the signal peptide; that stretch reads MARLLQASCLLSLLLAGFLPQSRG. Residue Sec73 is part of the active site. Residue Sec73 is a non-standard amino acid, selenocysteine.

The protein belongs to the glutathione peroxidase family. As to quaternary structure, homotetramer. Expressed intensively in the kidney and adrenal gland, and weakly in the cerebellum, heart, and lung. Secreted in plasma.

The protein resides in the secreted. The catalysed reaction is 2 glutathione + H2O2 = glutathione disulfide + 2 H2O. It catalyses the reaction tert-butyl hydroperoxide + 2 glutathione = tert-butanol + glutathione disulfide + H2O. Protects cells and enzymes from oxidative damage, by catalyzing the reduction of hydrogen peroxide, lipid peroxides and organic hydroperoxide, by glutathione. This is Glutathione peroxidase 3 from Macaca fuscata fuscata (Japanese macaque).